A 235-amino-acid chain; its full sequence is 15,16-dihydrobiliverdin:ferredoxin oxidoreductase (235 aa).

The protein belongs to the HY2 family.

It carries out the reaction 15,16-dihydrobiliverdin + oxidized 2[4Fe-4S]-[ferredoxin] = biliverdin IXalpha + reduced 2[4Fe-4S]-[ferredoxin] + 2 H(+). Functionally, catalyzes the two-electron reduction of biliverdin IX-alpha at the C15 methine bridge. This is 15,16-dihydrobiliverdin:ferredoxin oxidoreductase (pebA) from Parasynechococcus marenigrum (strain WH8102).